An 862-amino-acid polypeptide reads, in one-letter code: Protein PRQFV-amide (862 aa).

The N-terminal stretch at 1 to 20 (MSSQLLICSVFVLFTFGPNS) is a signal peptide. Residues 21 to 79 (FPSCLAQEQAGNSDATQLSADAKAPESAKDKSGDVQNDGTKSVRSKRDLEIDFGSGDVQ) constitute a propeptide that is removed on maturation. The segment at 32–68 (NSDATQLSADAKAPESAKDKSGDVQNDGTKSVRSKRD) is disordered. Basic and acidic residues predominate over residues 43-53 (KAPESAKDKSG). Residue Val86 is modified to Valine amide. Positions 90–149 (AAPPVFQTPLVQDKISGFIPSETESPVIGEFAFPGSVFMDDEEALGAEEEPMDDEDLEFY) are excised as a propeptide. A Valine amide modification is found at Val156. Positions 160–175 (GIDDYLLQEKLKDFIE) are excised as a propeptide. Valine amide is present on residues Val182, Val190, Val198, Val206, Val214, Val222, Val230, Val238, and Val246. Residues 250 to 259 (EADPSFLFED) constitute a propeptide that is removed on maturation. At Val266 the chain carries Valine amide. Positions 270–300 (SLDFLGGANWYNPYDVTMEPQSEGSDLQGFS) are excised as a propeptide. Val307 carries the valine amide modification. A propeptide spanning residues 311–319 (DAFDMFEFS) is cleaved from the precursor. Position 326 is a valine amide (Val326). Residues 330 to 338 (DQDEMFDFS) constitute a propeptide that is removed on maturation. A Valine amide modification is found at Val345. Residues 349–357 (DLQEFFDLS) constitute a propeptide that is removed on maturation. Val364 carries the post-translational modification Valine amide. Positions 368–376 (EFDDEIDFS) are excised as a propeptide. Residue Val383 is modified to Valine amide. The propeptide occupies 387–395 (ENDDDFDLS). Residue Val402 is modified to Valine amide. The propeptide occupies 406-414 (ENDDEFDLS). Val421 is subject to Valine amide. The segment covering 424–434 (RENDDELEFSK) has biased composition (basic and acidic residues). Residues 424 to 528 (RENDDELEFS…NNDDLDFSKR (105 aa)) are disordered. A propeptide spanning residues 425–433 (ENDDELEFS) is cleaved from the precursor. Val440 carries the post-translational modification Valine amide. A compositionally biased stretch (basic and acidic residues) spans 441–452 (GKREDDEIDFSK). Positions 444-451 (EDDEIDFS) are excised as a propeptide. The residue at position 458 (Val458) is a Valine amide. Residues 459-471 (GKRENDGEIDFSK) show a composition bias toward basic and acidic residues. Residues 462–470 (ENDGEIDFS) constitute a propeptide that is removed on maturation. A Valine amide modification is found at Val477. The span at 478 to 490 (GKRENDDEIDFSK) shows a compositional bias: basic and acidic residues. A propeptide spanning residues 481-489 (ENDDEIDFS) is cleaved from the precursor. The residue at position 496 (Val496) is a Valine amide. Residues 497-508 (GKREDGEIDFSK) are compositionally biased toward basic and acidic residues. Residues 500-507 (EDGEIDFS) constitute a propeptide that is removed on maturation. At Val514 the chain carries Valine amide. The segment covering 515 to 527 (GKRENNDDLDFSK) has biased composition (basic and acidic residues). A propeptide spanning residues 518-526 (ENNDDLDFS) is cleaved from the precursor. At Val533 the chain carries Valine amide. A propeptide spanning residues 537–545 (EVDDEIDFS) is cleaved from the precursor. Residues 549–634 (RQFVGKREND…RQFVGKREND (86 aa)) are disordered. Residue Val552 is modified to Valine amide. Residues 553–565 (GKRENDDDLDFSK) are compositionally biased toward basic and acidic residues. Positions 556–564 (ENDDDLDFS) are excised as a propeptide. Val571 is subject to Valine amide. Over residues 572–584 (GKRENDDDLEFSK) the composition is skewed to basic and acidic residues. A propeptide spanning residues 575 to 583 (ENDDDLEFS) is cleaved from the precursor. Val590 is subject to Valine amide. A propeptide spanning residues 594–602 (ENDPLLDFS) is cleaved from the precursor. Val609 is subject to Valine amide. Positions 610-622 (GKRENDDDLDFSK) are enriched in basic and acidic residues. Positions 613-621 (ENDDDLDFS) are excised as a propeptide. Val628 bears the Valine amide mark. Residues 632–640 (ENDPLIDFS) constitute a propeptide that is removed on maturation. Val647 is modified (valine amide). Positions 651-659 (ESDGDFELS) are excised as a propeptide. Residue Val666 is modified to Valine amide. Residues 670–677 (DVDGPGLS) constitute a propeptide that is removed on maturation. At Val684 the chain carries Valine amide. The propeptide occupies 688–695 (EDYDIDFA). Valine amide is present on Val702. The propeptide occupies 706–714 (GNEDEFEMS). Position 721 is a valine amide (Val721). Residues 724–757 (RNFEELDQDFLRHMHDILDKRIPQFVSLPSLTAA) constitute a propeptide that is removed on maturation. Val764 is modified (valine amide). The propeptide occupies 768–812 (SDAAFLETLRHLRDYVGGQDEQNVSEFSYQHPYPSDLNDVGLIQQ). At Val819 the chain carries Valine amide. The propeptide occupies 823 to 862 (GGDVDDINTTYRLGDFVSQPMSFVEEPSWLCRQLNAFGIS).

As to expression, expressed abundantly in the abdominal ganglion, much less in the pedal and cerebral ganglia, and rarely in the buccal and pleural ganglia.

It localises to the secreted. Its function is as follows. PRQFV-amide may act as a modulator within the feeding system as well as in other systems of Aplysia. The sequence is that of Protein PRQFV-amide from Aplysia californica (California sea hare).